The chain runs to 363 residues: Ribosomal RNA large subunit methyltransferase M (363 aa).

Residues Ser-194, 227-230 (CPGG), Asp-246, Asp-266, and Asp-284 each bind S-adenosyl-L-methionine. Residue Lys-313 is the Proton acceptor of the active site.

Belongs to the class I-like SAM-binding methyltransferase superfamily. RNA methyltransferase RlmE family. RlmM subfamily. Monomer.

It is found in the cytoplasm. The catalysed reaction is cytidine(2498) in 23S rRNA + S-adenosyl-L-methionine = 2'-O-methylcytidine(2498) in 23S rRNA + S-adenosyl-L-homocysteine + H(+). Catalyzes the 2'-O-methylation at nucleotide C2498 in 23S rRNA. This Haemophilus influenzae (strain PittEE) protein is Ribosomal RNA large subunit methyltransferase M.